The primary structure comprises 302 residues: Ribosomal RNA small subunit methyltransferase A (302 aa).

S-adenosyl-L-methionine-binding residues include Asn-27, Leu-29, Gly-54, Glu-75, Asp-100, and Asn-138.

Belongs to the class I-like SAM-binding methyltransferase superfamily. rRNA adenine N(6)-methyltransferase family. RsmA subfamily.

The protein localises to the cytoplasm. The enzyme catalyses adenosine(1518)/adenosine(1519) in 16S rRNA + 4 S-adenosyl-L-methionine = N(6)-dimethyladenosine(1518)/N(6)-dimethyladenosine(1519) in 16S rRNA + 4 S-adenosyl-L-homocysteine + 4 H(+). In terms of biological role, specifically dimethylates two adjacent adenosines (A1518 and A1519) in the loop of a conserved hairpin near the 3'-end of 16S rRNA in the 30S particle. May play a critical role in biogenesis of 30S subunits. The protein is Ribosomal RNA small subunit methyltransferase A of Natranaerobius thermophilus (strain ATCC BAA-1301 / DSM 18059 / JW/NM-WN-LF).